The sequence spans 241 residues: LexA repressor (241 aa).

The H-T-H motif DNA-binding region spans 41 to 61 (FREIGNAAGLKSPSSVKHQLQ). Catalysis depends on for autocatalytic cleavage activity residues Ser-165 and Lys-202.

Belongs to the peptidase S24 family. As to quaternary structure, homodimer.

The catalysed reaction is Hydrolysis of Ala-|-Gly bond in repressor LexA.. Functionally, represses a number of genes involved in the response to DNA damage (SOS response), including recA and lexA. In the presence of single-stranded DNA, RecA interacts with LexA causing an autocatalytic cleavage which disrupts the DNA-binding part of LexA, leading to derepression of the SOS regulon and eventually DNA repair. The polypeptide is LexA repressor (Bifidobacterium longum subsp. infantis (strain ATCC 15697 / DSM 20088 / JCM 1222 / NCTC 11817 / S12)).